We begin with the raw amino-acid sequence, 412 residues long: Poly-beta-1,6-N-acetyl-D-glucosamine synthase (412 aa).

4 consecutive transmembrane segments (helical) span residues Leu-7 to Ile-28, Ile-298 to Ile-320, Ile-332 to Ile-354, and Val-364 to Met-386.

It belongs to the glycosyltransferase 2 family.

Its subcellular location is the cell membrane. Its function is as follows. N-acetylglucosaminyltransferase that catalyzes the polymerization of single monomer units of UDP-N-acetylglucosamine to produce the linear homomer poly-beta-1,6-N-acetyl-D-glucosamine (PNAG, also referred to as PIA), a biofilm adhesin polysaccharide. Requires IcaD for full activity. The polypeptide is Poly-beta-1,6-N-acetyl-D-glucosamine synthase (icaA) (Staphylococcus epidermidis).